The chain runs to 370 residues: tRNA-specific 2-thiouridylase MnmA (370 aa).

ATP contacts are provided by residues 9 to 16 (GLSGGVDS) and Met-35. An interaction with target base in tRNA region spans residues 95–97 (NPD). The active-site Nucleophile is Cys-100. Cys-100 and Cys-198 are oxidised to a cystine. Gly-124 provides a ligand contact to ATP. The tract at residues 148-150 (KDQ) is interaction with tRNA. Residue Cys-198 is the Cysteine persulfide intermediate of the active site. The tract at residues 316–317 (RY) is interaction with tRNA.

Belongs to the MnmA/TRMU family.

The protein localises to the cytoplasm. The enzyme catalyses S-sulfanyl-L-cysteinyl-[protein] + uridine(34) in tRNA + AH2 + ATP = 2-thiouridine(34) in tRNA + L-cysteinyl-[protein] + A + AMP + diphosphate + H(+). Functionally, catalyzes the 2-thiolation of uridine at the wobble position (U34) of tRNA, leading to the formation of s(2)U34. This Acidovorax ebreus (strain TPSY) (Diaphorobacter sp. (strain TPSY)) protein is tRNA-specific 2-thiouridylase MnmA.